We begin with the raw amino-acid sequence, 548 residues long: NAD(P)H-quinone oxidoreductase chain 4 (548 aa).

The next 14 helical transmembrane spans lie at 17-37 (VPWLSLSILVPIGGALLIPFI), 48-68 (WYALIVTLITFLITVAAYLTG), 103-123 (LILLTSFITSLACLAAWPVTF), 127-147 (LFFFLLLAMDGGQIAVFAVQD), 149-169 (LLFFLAWELELLPVYLLLAIW), 181-201 (FILYTAGSSLFILLAALAMGF), 222-242 (GFQLLCYAGLLIAFGVKLPIV), 256-276 (TAPVHMLLAGILLKMGGYALL), 290-310 (FAPLLIVLGVVNIIYAALTSF), 327-347 (MGFVLIGIGSFSVLGSSGAML), 348-368 (QMISHGLIGASLFFLVGATYD), 389-409 (FALWTVCALASLALPGMSGFV), 430-450 (VVICGLAAVGVVLTPVYLLSM), and 477-497 (VYIIGCLLVPIIGIGLYPRLM).

This sequence belongs to the complex I subunit 4 family.

Its subcellular location is the cellular thylakoid membrane. The enzyme catalyses a plastoquinone + NADH + (n+1) H(+)(in) = a plastoquinol + NAD(+) + n H(+)(out). The catalysed reaction is a plastoquinone + NADPH + (n+1) H(+)(in) = a plastoquinol + NADP(+) + n H(+)(out). In terms of biological role, NDH-1 shuttles electrons from NAD(P)H, via FMN and iron-sulfur (Fe-S) centers, to quinones in the respiratory chain. The immediate electron acceptor for the enzyme in this species is believed to be plastoquinone. Couples the redox reaction to proton translocation (for every two electrons transferred, four hydrogen ions are translocated across the cytoplasmic membrane), and thus conserves the redox energy in a proton gradient. The chain is NAD(P)H-quinone oxidoreductase chain 4 from Synechococcus sp. (strain CC9902).